A 220-amino-acid chain; its full sequence is Protein GrpE (220 aa).

The segment at 1-55 (MCGGDVQGQGVASGCDEALERADSLRASDPVPVESGEGSVPGEHSQELETGASEE) is disordered.

This sequence belongs to the GrpE family. In terms of assembly, homodimer.

The protein localises to the cytoplasm. Participates actively in the response to hyperosmotic and heat shock by preventing the aggregation of stress-denatured proteins, in association with DnaK and GrpE. It is the nucleotide exchange factor for DnaK and may function as a thermosensor. Unfolded proteins bind initially to DnaJ; upon interaction with the DnaJ-bound protein, DnaK hydrolyzes its bound ATP, resulting in the formation of a stable complex. GrpE releases ADP from DnaK; ATP binding to DnaK triggers the release of the substrate protein, thus completing the reaction cycle. Several rounds of ATP-dependent interactions between DnaJ, DnaK and GrpE are required for fully efficient folding. In Treponema pallidum (strain Nichols), this protein is Protein GrpE.